The sequence spans 470 residues: Flotillin-like protein 1 (470 aa).

C35 is lipidated: S-palmitoyl cysteine. The stretch at 305–354 (EYETKVQEANWELYNKQKQAEAVLYEKQKQAEAQKAQADAAFYSKQKEAE) forms a coiled coil.

It belongs to the band 7/mec-2 family. Flotillin subfamily. May be palmitoylated.

The protein localises to the cell membrane. Its subcellular location is the membrane. It localises to the caveola. In terms of biological role, may act as a scaffolding protein within caveolar membranes, functionally participating in formation of caveolae or caveolae-like vesicles. In Arabidopsis thaliana (Mouse-ear cress), this protein is Flotillin-like protein 1 (FLOT1).